Consider the following 176-residue polypeptide: NAD(P)H-quinone oxidoreductase subunit 6, chloroplastic (176 aa).

Transmembrane regions (helical) follow at residues Phe10–Pro30, Pro32–Leu52, Ala61–Ile81, Leu92–Ile112, and Phe152–Ala172.

The protein belongs to the complex I subunit 6 family. As to quaternary structure, NDH is composed of at least 16 different subunits, 5 of which are encoded in the nucleus.

The protein resides in the plastid. Its subcellular location is the chloroplast thylakoid membrane. The catalysed reaction is a plastoquinone + NADH + (n+1) H(+)(in) = a plastoquinol + NAD(+) + n H(+)(out). It carries out the reaction a plastoquinone + NADPH + (n+1) H(+)(in) = a plastoquinol + NADP(+) + n H(+)(out). Functionally, NDH shuttles electrons from NAD(P)H:plastoquinone, via FMN and iron-sulfur (Fe-S) centers, to quinones in the photosynthetic chain and possibly in a chloroplast respiratory chain. The immediate electron acceptor for the enzyme in this species is believed to be plastoquinone. Couples the redox reaction to proton translocation, and thus conserves the redox energy in a proton gradient. In Lactuca sativa (Garden lettuce), this protein is NAD(P)H-quinone oxidoreductase subunit 6, chloroplastic (ndhG).